The chain runs to 170 residues: FMRFamide-like neuropeptides 6 (170 aa).

The N-terminal stretch at 1 to 19 (MNSRGLILTLGVVIAVAFA) is a signal peptide. Position 20 is a pyrrolidone carboxylic acid (Gln-20). Phe-39 bears the Phenylalanine amide mark. Positions 42 to 51 (SDGGNPMEME) are excised as a propeptide. Phe-60 is modified (phenylalanine amide). Positions 63 to 81 (RSSGGDEQELVGGDDIDME) are excised as a propeptide. Phe-90 bears the Phenylalanine amide mark. Positions 93 to 104 (RSGPQEDDMPME) are excised as a propeptide. At Phe-113 the chain carries Phenylalanine amide. The propeptide occupies 116 to 136 (RSSDMEVIGNEGVDGDAHDLF). Phe-145 is modified (phenylalanine amide). A propeptide spanning residues 148–159 (RSMGEEEDHDMM) is cleaved from the precursor. Positions 150-170 (MGEEEDHDMMKRKSAYMRFGR) are disordered. Residues 159–170 (MKRKSAYMRFGR) show a composition bias toward basic residues. The residue at position 168 (Phe-168) is a Phenylalanine amide.

The protein belongs to the FARP (FMRFamide related peptide) family. Each flp gene is expressed in a distinct set of neurons. Flp-6 is expressed in the ASE sensory neurons, AFD, ASG, PVT and I1 neurons.

It is found in the secreted. In terms of biological role, FMRFamides and FMRFamide-like peptides are neuropeptides. KSAYMRF-amide has an excitatory effect on dissected pharyngeal myogenic muscle system. The chain is FMRFamide-like neuropeptides 6 from Caenorhabditis elegans.